We begin with the raw amino-acid sequence, 260 residues long: Imidazole glycerol phosphate synthase subunit HisF (260 aa).

Active-site residues include Asp11 and Asp130.

This sequence belongs to the HisA/HisF family. Heterodimer of HisH and HisF.

The protein localises to the cytoplasm. The catalysed reaction is 5-[(5-phospho-1-deoxy-D-ribulos-1-ylimino)methylamino]-1-(5-phospho-beta-D-ribosyl)imidazole-4-carboxamide + L-glutamine = D-erythro-1-(imidazol-4-yl)glycerol 3-phosphate + 5-amino-1-(5-phospho-beta-D-ribosyl)imidazole-4-carboxamide + L-glutamate + H(+). Its pathway is amino-acid biosynthesis; L-histidine biosynthesis; L-histidine from 5-phospho-alpha-D-ribose 1-diphosphate: step 5/9. IGPS catalyzes the conversion of PRFAR and glutamine to IGP, AICAR and glutamate. The HisF subunit catalyzes the cyclization activity that produces IGP and AICAR from PRFAR using the ammonia provided by the HisH subunit. The polypeptide is Imidazole glycerol phosphate synthase subunit HisF (Caulobacter sp. (strain K31)).